The primary structure comprises 529 residues: Na(+)/H(+) antiporter NhaB (529 aa).

Helical transmembrane passes span Phe13 to Pro33, Ile34 to Phe54, Leu90 to Met110, Leu113 to Leu133, Cys136 to Ile156, Leu205 to Pro225, Phe241 to Phe261, Gly306 to Ile326, Gly327 to Gly347, Glu351 to Ile371, Ala451 to Ile471, and Val479 to Phe499.

This sequence belongs to the NhaB Na(+)/H(+) (TC 2.A.34) antiporter family.

The protein localises to the cell inner membrane. It catalyses the reaction 2 Na(+)(in) + 3 H(+)(out) = 2 Na(+)(out) + 3 H(+)(in). Na(+)/H(+) antiporter that extrudes sodium in exchange for external protons. The polypeptide is Na(+)/H(+) antiporter NhaB (Vibrio vulnificus (strain CMCP6)).